The following is a 431-amino-acid chain: 3-phosphoshikimate 1-carboxyvinyltransferase (431 aa).

Lys-21, Ser-22, and Arg-26 together coordinate 3-phosphoshikimate. Lys-21 serves as a coordination point for phosphoenolpyruvate. Gly-94 and Arg-122 together coordinate phosphoenolpyruvate. 3-phosphoshikimate contacts are provided by Ser-167, Gln-169, Asp-315, and Lys-342. A phosphoenolpyruvate-binding site is contributed by Gln-169. Asp-315 functions as the Proton acceptor in the catalytic mechanism. The phosphoenolpyruvate site is built by Arg-346 and Arg-388.

The protein belongs to the EPSP synthase family. As to quaternary structure, monomer.

It localises to the cytoplasm. The catalysed reaction is 3-phosphoshikimate + phosphoenolpyruvate = 5-O-(1-carboxyvinyl)-3-phosphoshikimate + phosphate. The protein operates within metabolic intermediate biosynthesis; chorismate biosynthesis; chorismate from D-erythrose 4-phosphate and phosphoenolpyruvate: step 6/7. In terms of biological role, catalyzes the transfer of the enolpyruvyl moiety of phosphoenolpyruvate (PEP) to the 5-hydroxyl of shikimate-3-phosphate (S3P) to produce enolpyruvyl shikimate-3-phosphate and inorganic phosphate. This Pelotomaculum thermopropionicum (strain DSM 13744 / JCM 10971 / SI) protein is 3-phosphoshikimate 1-carboxyvinyltransferase.